Consider the following 309-residue polypeptide: Taste receptor type 2 member 31 (309 aa).

Residues 1–2 (MT) are Extracellular-facing. A helical membrane pass occupies residues 3 to 23 (TFIPIIFSSLVVVIFVIGNFA). Topologically, residues 24–55 (NGFIALVNSIEWFKRQKISFADQILTALAVSR) are cytoplasmic. A helical transmembrane segment spans residues 56–76 (VGLLWVLLLNWYSTVLNPAFY). Over 77–100 (SVEVRTTAYNVWAVTGHFSNWLAT) the chain is Extracellular. A helical membrane pass occupies residues 101–121 (SLSIFYLLKIANFSNLIFLHL). Over 122–126 (KRRVK) the chain is Cytoplasmic. A helical membrane pass occupies residues 127–147 (SVILVMLLGPLLFLACQLFMI). At 148–181 (NMKEIVRTKEYEGNMTWKIKLRSAVYLSDATVTT) the chain is on the extracellular side. A glycan (N-linked (GlcNAc...) asparagine) is linked at N161. A helical membrane pass occupies residues 182–202 (LGNLVPFTLTLLCFLLLICSL). Topologically, residues 203 to 229 (CKHLKKMQLHGKGSQDPSTKVHIKVLQ) are cytoplasmic. Residues 230–250 (TVISFLLLCAIYFLSIMISVW) traverse the membrane as a helical segment. The Extracellular segment spans residues 251–259 (SFGSLKNKP). Residues 260–280 (VFMFCKAMRFSYPSIHPFILI) form a helical membrane-spanning segment. Residues 281-309 (WGNKKLKQTFLSVLRQVRYWVKGEKPSSP) lie on the Cytoplasmic side of the membrane.

Belongs to the G-protein coupled receptor T2R family.

The protein localises to the membrane. Functionally, receptor that may play a role in the perception of bitterness and is gustducin-linked. May play a role in sensing the chemical composition of the gastrointestinal content. The activity of this receptor may stimulate alpha gustducin, mediate PLC-beta-2 activation and lead to the gating of TRPM5. The chain is Taste receptor type 2 member 31 (TAS2R31) from Pan troglodytes (Chimpanzee).